Here is a 334-residue protein sequence, read N- to C-terminus: L-lactate dehydrogenase C chain (334 aa).

NAD(+)-binding positions include 30–58 and arginine 100; that span reads GQVG…VEDK. Substrate is bound by residues arginine 107, asparagine 139, and arginine 170. Position 139 (asparagine 139) interacts with NAD(+). Catalysis depends on histidine 194, which acts as the Proton acceptor. Threonine 249 contacts substrate.

It belongs to the LDH/MDH superfamily. LDH family. As to quaternary structure, homotetramer. In terms of tissue distribution, eye and liver.

It is found in the cytoplasm. It carries out the reaction (S)-lactate + NAD(+) = pyruvate + NADH + H(+). The protein operates within fermentation; pyruvate fermentation to lactate; (S)-lactate from pyruvate: step 1/1. The polypeptide is L-lactate dehydrogenase C chain (ldhc) (Fundulus heteroclitus (Killifish)).